The primary structure comprises 197 residues: Protein GrpE (197 aa).

Residues 1–39 are disordered; the sequence is MSSKEQKTPEGQAPEEIIMDQHEEIEAVEPEASAEQVDP.

This sequence belongs to the GrpE family. As to quaternary structure, homodimer.

It localises to the cytoplasm. Functionally, participates actively in the response to hyperosmotic and heat shock by preventing the aggregation of stress-denatured proteins, in association with DnaK and GrpE. It is the nucleotide exchange factor for DnaK and may function as a thermosensor. Unfolded proteins bind initially to DnaJ; upon interaction with the DnaJ-bound protein, DnaK hydrolyzes its bound ATP, resulting in the formation of a stable complex. GrpE releases ADP from DnaK; ATP binding to DnaK triggers the release of the substrate protein, thus completing the reaction cycle. Several rounds of ATP-dependent interactions between DnaJ, DnaK and GrpE are required for fully efficient folding. The protein is Protein GrpE of Escherichia coli O127:H6 (strain E2348/69 / EPEC).